Consider the following 331-residue polypeptide: DNA-directed RNA polymerase subunit alpha (331 aa).

Residues 1–230 form an alpha N-terminal domain (alpha-NTD) region; that stretch reads MKNIKTSPYI…KQMSVFNSEW (230 aa). Positions 247-331 are alpha C-terminal domain (alpha-CTD); sequence LKPLLQKIEA…ALQKRLNKLK (85 aa).

This sequence belongs to the RNA polymerase alpha chain family. In terms of assembly, homodimer. The RNAP catalytic core consists of 2 alpha, 1 beta/beta' and 1 omega subunit. When a sigma factor is associated with the core the holoenzyme is formed, which can initiate transcription.

The enzyme catalyses RNA(n) + a ribonucleoside 5'-triphosphate = RNA(n+1) + diphosphate. Functionally, DNA-dependent RNA polymerase catalyzes the transcription of DNA into RNA using the four ribonucleoside triphosphates as substrates. The polypeptide is DNA-directed RNA polymerase subunit alpha (Wolinella succinogenes (strain ATCC 29543 / DSM 1740 / CCUG 13145 / JCM 31913 / LMG 7466 / NCTC 11488 / FDC 602W) (Vibrio succinogenes)).